Here is a 266-residue protein sequence, read N- to C-terminus: Ribosomal RNA small subunit methyltransferase A (266 aa).

The S-adenosyl-L-methionine site is built by asparagine 16, leucine 18, glycine 43, glutamate 64, aspartate 89, and asparagine 110.

It belongs to the class I-like SAM-binding methyltransferase superfamily. rRNA adenine N(6)-methyltransferase family. RsmA subfamily.

It localises to the cytoplasm. It carries out the reaction adenosine(1518)/adenosine(1519) in 16S rRNA + 4 S-adenosyl-L-methionine = N(6)-dimethyladenosine(1518)/N(6)-dimethyladenosine(1519) in 16S rRNA + 4 S-adenosyl-L-homocysteine + 4 H(+). Functionally, specifically dimethylates two adjacent adenosines (A1518 and A1519) in the loop of a conserved hairpin near the 3'-end of 16S rRNA in the 30S particle. May play a critical role in biogenesis of 30S subunits. The sequence is that of Ribosomal RNA small subunit methyltransferase A from Marinomonas sp. (strain MWYL1).